The chain runs to 527 residues: Phosphoenolpyruvate carboxykinase (ATP) (527 aa).

Substrate-binding residues include R56, Y192, and K198. ATP is bound by residues K198, H217, and 233–241 (GLSGTGKTT). Mn(2+)-binding residues include K198 and H217. Position 254 (D254) interacts with Mn(2+). E282, R319, and T444 together coordinate ATP. Substrate is bound at residue R319.

It belongs to the phosphoenolpyruvate carboxykinase (ATP) family. Mn(2+) serves as cofactor.

The protein localises to the cytoplasm. It catalyses the reaction oxaloacetate + ATP = phosphoenolpyruvate + ADP + CO2. The protein operates within carbohydrate biosynthesis; gluconeogenesis. Involved in the gluconeogenesis. Catalyzes the conversion of oxaloacetate (OAA) to phosphoenolpyruvate (PEP) through direct phosphoryl transfer between the nucleoside triphosphate and OAA. This is Phosphoenolpyruvate carboxykinase (ATP) from Bacillus velezensis (strain DSM 23117 / BGSC 10A6 / LMG 26770 / FZB42) (Bacillus amyloliquefaciens subsp. plantarum).